The following is a 294-amino-acid chain: 4-hydroxy-tetrahydrodipicolinate synthase (294 aa).

T46 is a pyruvate binding site. Y135 functions as the Proton donor/acceptor in the catalytic mechanism. K164 (schiff-base intermediate with substrate) is an active-site residue. Position 205 (I205) interacts with pyruvate.

Belongs to the DapA family. As to quaternary structure, homotetramer; dimer of dimers.

The protein resides in the cytoplasm. It catalyses the reaction L-aspartate 4-semialdehyde + pyruvate = (2S,4S)-4-hydroxy-2,3,4,5-tetrahydrodipicolinate + H2O + H(+). It participates in amino-acid biosynthesis; L-lysine biosynthesis via DAP pathway; (S)-tetrahydrodipicolinate from L-aspartate: step 3/4. Functionally, catalyzes the condensation of (S)-aspartate-beta-semialdehyde [(S)-ASA] and pyruvate to 4-hydroxy-tetrahydrodipicolinate (HTPA). The chain is 4-hydroxy-tetrahydrodipicolinate synthase from Nitratiruptor sp. (strain SB155-2).